Reading from the N-terminus, the 70-residue chain is Large ribosomal subunit protein bL31 (70 aa).

The Zn(2+) site is built by C16, C18, C37, and C40.

The protein belongs to the bacterial ribosomal protein bL31 family. Type A subfamily. In terms of assembly, part of the 50S ribosomal subunit. Zn(2+) serves as cofactor.

Binds the 23S rRNA. This Histophilus somni (strain 2336) (Haemophilus somnus) protein is Large ribosomal subunit protein bL31.